Reading from the N-terminus, the 147-residue chain is MVHLTADETALVTGLWAKVNVKEYGGEALGRLLVVYPWTQRFFEHFGDLSSASAVMHNPKVKAHGEKVLASFGDGLKHLDDLKGAFAELSALHCEKSHVDPQNFKLLGNMLVCVLSRHLGKEFSPQAQAAYEKVVAGVANALAHKYH.

Residues 3–147 (HLTADETALV…VANALAHKYH (145 aa)) form the Globin domain. Position 51 is a phosphoserine (Ser-51). His-64 and His-93 together coordinate heme b.

This sequence belongs to the globin family. As to quaternary structure, heterotetramer of two delta chains and two alpha chains. Red blood cells.

This Dugong dugon (Dugong) protein is Hemoglobin subunit delta (HBD).